Consider the following 139-residue polypeptide: Hydrogenase maturation factor HypA (139 aa).

Ni(2+) is bound at residue His-2. Cys-73, Cys-76, Cys-110, and Cys-113 together coordinate Zn(2+).

The protein belongs to the HypA/HybF family.

Functionally, involved in the maturation of [NiFe] hydrogenases. Required for nickel insertion into the metal center of the hydrogenase. This Thermococcus gammatolerans (strain DSM 15229 / JCM 11827 / EJ3) protein is Hydrogenase maturation factor HypA.